Consider the following 156-residue polypeptide: uncharacterized protein (156 aa).

The N-acetyltransferase domain maps to 10–156 (VAARTFPLAC…NDYVMVRELV (147 aa)).

The protein belongs to the acetyltransferase family.

This is an uncharacterized protein from Mycobacterium bovis (strain ATCC BAA-935 / AF2122/97).